A 71-amino-acid polypeptide reads, in one-letter code: Large ribosomal subunit protein uL29 (71 aa).

Belongs to the universal ribosomal protein uL29 family.

The chain is Large ribosomal subunit protein uL29 from Roseiflexus sp. (strain RS-1).